Here is a 303-residue protein sequence, read N- to C-terminus: N-acetyl-D-glucosamine kinase (303 aa).

ATP contacts are provided by residues 4–11 (GFDIGGTK) and 133–140 (GVGGGLVL). Residues histidine 157, cysteine 177, cysteine 179, and cysteine 184 each coordinate Zn(2+).

Belongs to the ROK (NagC/XylR) family. NagK subfamily.

It carries out the reaction N-acetyl-D-glucosamine + ATP = N-acetyl-D-glucosamine 6-phosphate + ADP + H(+). The protein operates within cell wall biogenesis; peptidoglycan recycling. Catalyzes the phosphorylation of N-acetyl-D-glucosamine (GlcNAc) derived from cell-wall degradation, yielding GlcNAc-6-P. This chain is N-acetyl-D-glucosamine kinase, found in Salmonella paratyphi A (strain ATCC 9150 / SARB42).